The primary structure comprises 333 residues: Tetraacyldisaccharide 4'-kinase (333 aa).

55-62 (TAGGNGKT) serves as a coordination point for ATP.

Belongs to the LpxK family.

It catalyses the reaction a lipid A disaccharide + ATP = a lipid IVA + ADP + H(+). Its pathway is glycolipid biosynthesis; lipid IV(A) biosynthesis; lipid IV(A) from (3R)-3-hydroxytetradecanoyl-[acyl-carrier-protein] and UDP-N-acetyl-alpha-D-glucosamine: step 6/6. Functionally, transfers the gamma-phosphate of ATP to the 4'-position of a tetraacyldisaccharide 1-phosphate intermediate (termed DS-1-P) to form tetraacyldisaccharide 1,4'-bis-phosphate (lipid IVA). This Pectobacterium atrosepticum (strain SCRI 1043 / ATCC BAA-672) (Erwinia carotovora subsp. atroseptica) protein is Tetraacyldisaccharide 4'-kinase.